Reading from the N-terminus, the 81-residue chain is Apolipoprotein C-I, acidic form (81 aa).

An N-terminal signal peptide occupies residues 1–24 (MRLFLSLLVVVLSIVLEGPTPAQG).

This sequence belongs to the apolipoprotein C1 family.

The protein localises to the secreted. In Cercocebus atys (Sooty mangabey), this protein is Apolipoprotein C-I, acidic form (APOC1A).